A 1515-amino-acid chain; its full sequence is Neurite extension and migration factor (1515 aa).

Basic and acidic residues predominate over residues 381–405 (DKKKGKEEVHEDKSIETKDEKDNGE). 6 disordered regions span residues 381–415 (DKKKGKEEVHEDKSIETKDEKDNGEKPALNNKPCG), 505–529 (VNERKEWPPGGSKEEDDDEWCPKKR), 731–774 (KKIK…HMSE), 1158–1225 (FDEP…TKKG), 1372–1422 (TPQE…EDSR), and 1435–1479 (TLGN…AGTT). Composition is skewed to polar residues over residues 746-757 (SPVSEDTSSKAN) and 763-772 (TPGTSNSSHM). Over residues 1180 to 1193 (PGKSGAVSQSSSQK) the composition is skewed to low complexity. Residues 1442 to 1452 (THKKLYRHKSS) are compositionally biased toward basic residues. The segment covering 1455 to 1479 (GLRDEKYKGKRVEREQAHKDEAGTT) has biased composition (basic and acidic residues).

Expressed in the brain, particularly during the late embryonic and perinatal stages of development. In the developing brain, it is expressed only in the cortical plate and subplate region but not in the intermediate or ventricular zone.

The protein resides in the nucleus. It localises to the cytoplasm. Its function is as follows. Involved in neurite outgrowth by regulating cell-cell adhesion via the N-cadherin signaling pathway. May act by regulating expression of protein-coding genes, such as N-cadherins and integrin beta-1 (ITGB1). The polypeptide is Neurite extension and migration factor (Mus musculus (Mouse)).